A 186-amino-acid chain; its full sequence is Signal peptidase I P (186 aa).

Residues 1 to 15 (MTKEKVFKKKSSILE) lie on the Cytoplasmic side of the membrane. Residues 16 to 35 (WGKAIVIAVILALLIRNFLF) form a helical membrane-spanning segment. Topologically, residues 36–186 (EPYVVEGKSM…FPFSNMRKAK (151 aa)) are extracellular. Active-site residues include serine 44 and lysine 86.

The protein belongs to the peptidase S26 family.

The protein resides in the cell membrane. It carries out the reaction Cleavage of hydrophobic, N-terminal signal or leader sequences from secreted and periplasmic proteins.. The protein is Signal peptidase I P (sipP) of Bacillus subtilis subsp. natto.